A 201-amino-acid chain; its full sequence is MQAFTAHTGLAVAIDSANVDTDQIIPKQFLSKVTRDGFGVHLFHDWRYLDDAGDKPNPDFELNQPRYKGASILLAQENFGCGSSREHAPWALADFGFRVIIAPTFADIFYGNSINNGLLPVKLTSVQVQQLMDEVAAKEGAQITVDLQALTVTSPSGSVFDFTIVESARHKLLNGLDAIGLTLSFEQQISDYETHIPAWFA.

This sequence belongs to the LeuD family. LeuD type 1 subfamily. In terms of assembly, heterodimer of LeuC and LeuD.

The catalysed reaction is (2R,3S)-3-isopropylmalate = (2S)-2-isopropylmalate. Its pathway is amino-acid biosynthesis; L-leucine biosynthesis; L-leucine from 3-methyl-2-oxobutanoate: step 2/4. Catalyzes the isomerization between 2-isopropylmalate and 3-isopropylmalate, via the formation of 2-isopropylmaleate. The sequence is that of 3-isopropylmalate dehydratase small subunit from Shewanella frigidimarina (strain NCIMB 400).